The sequence spans 239 residues: Sugar fermentation stimulation protein homolog (239 aa).

This sequence belongs to the SfsA family.

The protein is Sugar fermentation stimulation protein homolog of Cyanothece sp. (strain PCC 7425 / ATCC 29141).